Consider the following 134-residue polypeptide: Small ribosomal subunit protein uS11 (134 aa).

A compositionally biased stretch (polar residues) spans 113-122; that stretch reads SSITDATPQP. Residues 113–134 are disordered; that stretch reads SSITDATPQPHNGCRPTKRRKV.

The protein belongs to the universal ribosomal protein uS11 family. Part of the 30S ribosomal subunit. Interacts with proteins S7 and S18. Binds to IF-3.

Its function is as follows. Located on the platform of the 30S subunit, it bridges several disparate RNA helices of the 16S rRNA. Forms part of the Shine-Dalgarno cleft in the 70S ribosome. The polypeptide is Small ribosomal subunit protein uS11 (Corynebacterium aurimucosum (strain ATCC 700975 / DSM 44827 / CIP 107346 / CN-1) (Corynebacterium nigricans)).